The following is a 1016-amino-acid chain: Poly [ADP-ribose] polymerase 1 (1016 aa).

A2 is subject to N-acetylalanine. The PARP-type 1 zinc-finger motif lies at 9–93 (YRVEYAKSGR…TIKKMAETGG (85 aa)). Zn(2+) contacts are provided by C21 and C24. Position 41 is a phosphoserine (S41). 2 residues coordinate Zn(2+): H53 and C56. K100 and K108 each carry N6-acetyllysine. The PARP-type 2 zinc finger occupies 116 to 206 (FGAGYAKSNR…TLKKQLPAIK (91 aa)). The Zn(2+) site is built by C128 and C131. K134 is subject to N6-acetyllysine. Residues H162 and C165 each contribute to the Zn(2+) site. 2 positions are modified to phosphoserine: S180 and S188. K206 is covalently cross-linked (Glycyl lysine isopeptide (Lys-Gly) (interchain with G-Cter in SUMO1); alternate). K206 participates in a covalent cross-link: Glycyl lysine isopeptide (Lys-Gly) (interchain with G-Cter in SUMO2); alternate. 2 short sequence motifs (nuclear localization signal) span residues 210 to 212 (KRK) and 224 to 229 (KKKSKK). Residues 228–362 (KKEKDKEIKL…IKKQDRIFPP (135 aa)) enclose the PADR1 zinc-binding domain. Residue K252 forms a Glycyl lysine isopeptide (Lys-Gly) (interchain with G-Cter in SUMO2) linkage. Residues S277 and S280 each carry the phosphoserine modification. The zinc ribbon stretch occupies residues 293-335 (GALLPCEECSGQLVFKGDAYYCTGDVTAWTKCMVKTQTPNRKE). The Zn(2+) site is built by C298, C301, C314, and C324. The interval 360–390 (FPPESSTPVGAAAPPSAASAPAAVHSGPPDK) is disordered. Over residues 365-386 (STPVGAAAPPSAASAPAAVHSG) the composition is skewed to low complexity. Positions 376–526 (AASAPAAVHS…GTNKSEKRMK (151 aa)) are automodification domain. Residues 387-478 (PPDKPLSNMK…KSLQELLSTH (92 aa)) form the BRCT domain. Position 389 is a polyADP-ribosyl aspartic acid (D389). 7 positions are modified to polyADP-ribosyl glutamic acid: E409, E415, E437, E446, E447, E450, and E458. A Glycyl lysine isopeptide (Lys-Gly) (interchain with G-Cter in SUMO2) cross-link involves residue K469. 2 positions are modified to polyADP-ribosyl glutamic acid: E473 and E486. K488 is covalently cross-linked (Glycyl lysine isopeptide (Lys-Gly) (interchain with G-Cter in SUMO1); alternate). K488 participates in a covalent cross-link: Glycyl lysine isopeptide (Lys-Gly) (interchain with G-Cter in SUMO2); alternate. 2 positions are modified to polyADP-ribosyl glutamic acid: E490 and E493. Residues 494-523 (AVGPKGKSGAAPSKKSKGPVKEEGTNKSEK) are disordered. The span at 496–506 (GPKGKSGAAPS) shows a compositional bias: low complexity. An ADP-ribosylserine mark is found at S501, S506, and S509. Positions 512-523 (PVKEEGTNKSEK) are enriched in basic and acidic residues. K514 participates in a covalent cross-link: Glycyl lysine isopeptide (Lys-Gly) (interchain with G-Cter in SUMO2). E515 and E516 each carry polyADP-ribosyl glutamic acid. An ADP-ribosylserine modification is found at S521. At E522 the chain carries PolyADP-ribosyl glutamic acid. K523 is subject to N6-(ADP-ribosyl)lysine. K530 participates in a covalent cross-link: Glycyl lysine isopeptide (Lys-Gly) (interchain with G-Cter in SUMO2). In terms of domain architecture, WGR spans 544 to 640 (NAHVLEKGGK…KNFTKHPKKF (97 aa)). At T596 the chain carries Phosphothreonine. 2 positions are modified to N6-acetyllysine: K602 and K623. In terms of domain architecture, PARP alpha-helical spans 664–781 (KSKLPKPVQN…DIEVAYSLLR (118 aa)). A Glycyl lysine isopeptide (Lys-Gly) (interchain with G-Cter in SUMO1); alternate cross-link involves residue K750. Residue K750 forms a Glycyl lysine isopeptide (Lys-Gly) (interchain with G-Cter in SUMO2); alternate linkage. Phosphoserine is present on residues S784 and S788. In terms of domain architecture, PARP catalytic spans 790 to 1016 (DPIDVNYEKL…LKFNFKTSLW (227 aa)). Residues 864 to 866 (HGS), G873, R880, and S906 each bind NAD(+). The For poly [ADP-ribose] polymerase activity role is filled by E990.

Belongs to the ARTD/PARP family. In terms of assembly, homodimer; PARP-type zinc-fingers from separate PARP1 molecules form a dimer module that specifically recognizes DNA strand breaks. Heterodimer; heterodimerizes with PARP2. Interacts (via the PARP catalytic domain) with HPF1. Interacts with NMNAT1. Interacts with nucleosomes; with a preference for nucleosomes containing H2A.X. Interacts with APTX. Component of a base excision repair (BER) complex, containing at least XRCC1, PARP1, PARP2, POLB and LRIG3. Interacts with SRY. The SWAP complex consists of NPM1, NCL, PARP1 and SWAP70. Interacts with TIAM2. Interacts with PARP3; leading to activate PARP1 in absence of DNA. Interacts (when poly-ADP-ribosylated) with CHD1L (via macro domain). Interacts with the DNA polymerase alpha catalytic subunit POLA1; this interaction functions as part of the control of replication fork progression. Interacts with EEF1A1 and TXK. Interacts with RNF4. Interacts with RNF146. Interacts with ZNF423. Interacts with APLF. Interacts with SNAI1 (via zinc fingers); the interaction requires SNAI1 to be poly-ADP-ribosylated and non-phosphorylated (active) by GSK3B. Interacts (when poly-ADP-ribosylated) with PARP9. Interacts with NR4A3; activates PARP1 by improving acetylation of PARP1 and suppressing the interaction between PARP1 and SIRT1. Interacts (via catalytic domain) with PUM3; the interaction inhibits the poly-ADP-ribosylation activity of PARP1 and the degradation of PARP1 by CASP3 following genotoxic stress. Interacts with ZNF365. Interacts with RRP1B. Interacts with TIMELESS; the interaction is direct. Interacts with CGAS; leading to impede the formation of the PARP1-TIMELESS complex. Interacts with KHDC3L, the interaction is increased following the formation of DNA double-strand breaks. Interacts (when auto-poly-ADP-ribosylated) with XRCC1; leading to inhibit PARP1 ADP-ribosyltransferase activity. Interacts with SPINDOC; promoting PARP1 ADP-ribosyltransferase activity. Interacts with BANF1; leading to inhibit PARP1 ADP-ribosyltransferase activity in response to oxidative DNA damage. Interacts (when sumoylated and ubiquitinated) with VCP/p97; leading to its extraction from chromatin. Interacts with YARS1; promoting PARP1 ADP-ribosyltransferase activity. Interacts with PACMP micropeptide; Interacts with PACMP micropeptide; interaction. Interacts (when poly-ADP-ribosylated) with isoform 1 of MACROH2A1; MACROH2A1 specifically binds to poly-ADP-ribose chains and inhibits PARP1 activity, limiting the consumption of nuclear NAD(+). Interacts with CARM1; promoting recruitment to replication forks. Interacts with RECQL. Interacts with ZNF32; the interaction reshapes ZNF432 interacting proteins. Interacts with TPRN; TPRN interacts with a number of DNA damage response proteins, is recruited to sites of DNA damage and may play a role in DNA damage repair. As to quaternary structure, interacts (when auto-poly-ADP-ribosylated) with AIFM1. Post-translationally, poly-ADP-ribosylated on serine, glutamate and aspartate residues by autocatalysis. Auto-ADP-ribosylation on serine takes place following interaction with HPF1. Auto poly-ADP-ribosylation on serine residues promotes its dissociation from chromatin. Poly-ADP-ribosylated by PARP2; poly-ADP-ribosylation mediates the recruitment of CHD1L to DNA damage sites. Mono-ADP-ribosylated at Lys-523 by SIRT6 in response to oxidative stress, promoting recruitment to double-strand breaks (DSBs) sites. In terms of processing, S-nitrosylated, leading to inhibit transcription regulation activity. Phosphorylated at Thr-596 by PRKDC in response to DNA damage following virus infection, promoting its translocation to the cytosol. Phosphorylated by TXK. Post-translationally, proteolytically cleaved by caspase-3 (CASP3) and caspase-7 (CASP7) in response to apoptosis to generate the Poly [ADP-ribose] polymerase 1, processed N-terminus and Poly [ADP-ribose] polymerase 1, processed C-terminus forms. In terms of processing, sumoylated with SUMO1 or SUMO2 by PIAS4 following prolonged residence (trapping) to chromatin. Sumoylation promotes ubiquitination by RNF4 and removal from chromatin by VCP/p97. Ubiquitinated by RNF4 following sumoylation by PIAS4 in response to prolonged residence (trapping) to chromatin. Ubiquitination promotes removal from chromatin by VCP/p97.

The protein localises to the chromosome. It localises to the nucleus. The protein resides in the nucleolus. It is found in the cytoplasm. Its subcellular location is the cytosol. It carries out the reaction NAD(+) + (ADP-D-ribosyl)n-acceptor = nicotinamide + (ADP-D-ribosyl)n+1-acceptor + H(+).. It catalyses the reaction L-seryl-[protein] + NAD(+) = O-(ADP-D-ribosyl)-L-seryl-[protein] + nicotinamide + H(+). The enzyme catalyses L-aspartyl-[protein] + NAD(+) = 4-O-(ADP-D-ribosyl)-L-aspartyl-[protein] + nicotinamide. The catalysed reaction is L-glutamyl-[protein] + NAD(+) = 5-O-(ADP-D-ribosyl)-L-glutamyl-[protein] + nicotinamide. It carries out the reaction L-tyrosyl-[protein] + NAD(+) = O-(ADP-D-ribosyl)-L-tyrosyl-[protein] + nicotinamide + H(+). It catalyses the reaction L-histidyl-[protein] + NAD(+) = N(tele)-(ADP-D-ribosyl)-L-histidyl-[protein] + nicotinamide + H(+). ADP-ribosyltransferase activity is regulated via an allosteric activation mechanism. In absence of activation signal, PARP1 is autoinhibited by the PARP alpha-helical domain (also named HD region), which prevents effective NAD(+)-binding. Activity is highly stimulated by signals, such as DNA strand breaks. Binding to damaged DNA unfolds the PARP alpha-helical domain, relieving autoinhibition. Poly-ADP-ribosyltransferase activity is tightly regulated and PARP1 is removed from damaged chromatin following initial poly-ADP-ribosylation of chromatin to avoid prolonged residence (trapping) that has cytotoxic consequences. A number of factors (VCP/p97) or post-translational modifications (auto-poly-ADP-ribosylation or ubiquitination) promote PARP1 removal from chromatin. Functionally, poly-ADP-ribosyltransferase that mediates poly-ADP-ribosylation of proteins and plays a key role in DNA repair. Mediates glutamate, aspartate, serine, histidine or tyrosine ADP-ribosylation of proteins: the ADP-D-ribosyl group of NAD(+) is transferred to the acceptor carboxyl group of target residues and further ADP-ribosyl groups are transferred to the 2'-position of the terminal adenosine moiety, building up a polymer with an average chain length of 20-30 units. Serine ADP-ribosylation of proteins constitutes the primary form of ADP-ribosylation of proteins in response to DNA damage. Specificity for the different amino acids is conferred by interacting factors, such as HPF1 and NMNAT1. Following interaction with HPF1, catalyzes serine ADP-ribosylation of target proteins; HPF1 confers serine specificity by completing the PARP1 active site. Also catalyzes tyrosine ADP-ribosylation of target proteins following interaction with HPF1. Following interaction with NMNAT1, catalyzes glutamate and aspartate ADP-ribosylation of target proteins; NMNAT1 confers glutamate and aspartate specificity. PARP1 initiates the repair of DNA breaks: recognizes and binds DNA breaks within chromatin and recruits HPF1, licensing serine ADP-ribosylation of target proteins, such as histones (H2BS6ADPr and H3S10ADPr), thereby promoting decompaction of chromatin and the recruitment of repair factors leading to the reparation of DNA strand breaks. HPF1 initiates serine ADP-ribosylation but restricts the polymerase activity of PARP1 in order to limit the length of poly-ADP-ribose chains. In addition to base excision repair (BER) pathway, also involved in double-strand breaks (DSBs) repair: together with TIMELESS, accumulates at DNA damage sites and promotes homologous recombination repair by mediating poly-ADP-ribosylation. Mediates the poly-ADP-ribosylation of a number of proteins, including itself, APLF, CHFR and NFAT5. In addition to proteins, also able to ADP-ribosylate DNA: catalyzes ADP-ribosylation of DNA strand break termini containing terminal phosphates and a 2'-OH group in single- and double-stranded DNA, respectively. Required for PARP9 and DTX3L recruitment to DNA damage sites. PARP1-dependent PARP9-DTX3L-mediated ubiquitination promotes the rapid and specific recruitment of 53BP1/TP53BP1, UIMC1/RAP80, and BRCA1 to DNA damage sites. PARP1-mediated DNA repair in neurons plays a role in sleep: senses DNA damage in neurons and promotes sleep, facilitating efficient DNA repair. In addition to DNA repair, also involved in other processes, such as transcription regulation, programmed cell death, membrane repair, adipogenesis and innate immunity. Acts as a repressor of transcription: binds to nucleosomes and modulates chromatin structure in a manner similar to histone H1, thereby altering RNA polymerase II. Acts both as a positive and negative regulator of transcription elongation, depending on the context. Acts as a positive regulator of transcription elongation by mediating poly-ADP-ribosylation of NELFE, preventing RNA-binding activity of NELFE and relieving transcription pausing. Acts as a negative regulator of transcription elongation in response to DNA damage by catalyzing poly-ADP-ribosylation of CCNT1, disrupting the phase separation activity of CCNT1 and subsequent activation of CDK9. Involved in replication fork progression following interaction with CARM1: mediates poly-ADP-ribosylation at replication forks, slowing fork progression. Poly-ADP-ribose chains generated by PARP1 also play a role in poly-ADP-ribose-dependent cell death, a process named parthanatos. Also acts as a negative regulator of the cGAS-STING pathway. Acts by mediating poly-ADP-ribosylation of CGAS: PARP1 translocates into the cytosol following phosphorylation by PRKDC and catalyzes poly-ADP-ribosylation and inactivation of CGAS. Acts as a negative regulator of adipogenesis: catalyzes poly-ADP-ribosylation of histone H2B on 'Glu-35' (H2BE35ADPr) following interaction with NMNAT1, inhibiting phosphorylation of H2B at 'Ser-36' (H2BS36ph), thereby blocking expression of pro-adipogenetic genes. Involved in the synthesis of ATP in the nucleus, together with NMNAT1, PARG and NUDT5. Nuclear ATP generation is required for extensive chromatin remodeling events that are energy-consuming. Promotes AIFM1-mediated apoptosis. This form, which translocates into the cytoplasm following cleavage by caspase-3 (CASP3) and caspase-7 (CASP7) in response to apoptosis, is auto-poly-ADP-ribosylated and serves as a poly-ADP-ribose carrier to induce AIFM1-mediated apoptosis. Its function is as follows. This cleavage form irreversibly binds to DNA breaks and interferes with DNA repair, promoting DNA damage-induced apoptosis. This is Poly [ADP-ribose] polymerase 1 (PARP1) from Bos taurus (Bovine).